The primary structure comprises 355 residues: Peptide chain release factor 1 (355 aa).

Gln233 is modified (N5-methylglutamine).

The protein belongs to the prokaryotic/mitochondrial release factor family. Post-translationally, methylated by PrmC. Methylation increases the termination efficiency of RF1.

The protein localises to the cytoplasm. Functionally, peptide chain release factor 1 directs the termination of translation in response to the peptide chain termination codons UAG and UAA. This Syntrophomonas wolfei subsp. wolfei (strain DSM 2245B / Goettingen) protein is Peptide chain release factor 1.